The following is a 373-amino-acid chain: Spermidine/putrescine import ATP-binding protein PotA (373 aa).

The 231-residue stretch at 11–241 (IELRSLKKSY…PSNLFVAKFI (231 aa)) folds into the ABC transporter domain. 43–50 (GPSGCGKT) is a binding site for ATP.

It belongs to the ABC transporter superfamily. Spermidine/putrescine importer (TC 3.A.1.11.1) family. In terms of assembly, the complex is composed of two ATP-binding proteins (PotA), two transmembrane proteins (PotB and PotC) and a solute-binding protein (PotD).

It localises to the cell inner membrane. It catalyses the reaction ATP + H2O + polyamine-[polyamine-binding protein]Side 1 = ADP + phosphate + polyamineSide 2 + [polyamine-binding protein]Side 1.. Part of the ABC transporter complex PotABCD involved in spermidine/putrescine import. Responsible for energy coupling to the transport system. This Mannheimia succiniciproducens (strain KCTC 0769BP / MBEL55E) protein is Spermidine/putrescine import ATP-binding protein PotA.